The primary structure comprises 314 residues: Vomeronasal type-1 receptor 98 (314 aa).

Residues 1–19 (MNKDTTMYCSAYIRDVFFC) lie on the Extracellular side of the membrane. A helical membrane pass occupies residues 20–40 (EIGVGISANSCLLLFHIFMFI). Over 41–49 (RGHRPRLTD) the chain is Cytoplasmic. Residues 50–70 (LPIGLMALIHLLMLLLAAYIA) traverse the membrane as a helical segment. Residues 71–92 (KDFFMSSGWDDITCKLFIFLHR) are Extracellular-facing. A disulfide bond links Cys84 and Cys171. A helical membrane pass occupies residues 93-113 (FFRSLSVCATCMLSVFQTIIL). Topologically, residues 114–133 (CPQSSHLAKFKPNSPYHLSC) are cytoplasmic. Residues 134–154 (FFIFMSIFYTSISSHILIAAI) form a helical membrane-spanning segment. The Extracellular portion of the chain corresponds to 155-186 (ATQNLTSVNLIYITKSCSFLPMSSSMQRTFST). Asn158 is a glycosylation site (N-linked (GlcNAc...) asparagine). Residues 187–207 (LLAFRNAFLIGLMGLSTCYMA) form a helical membrane-spanning segment. Residues 208–235 (TLLCRHKTRSQRLQNSKLSPKATPEQRA) lie on the Cytoplasmic side of the membrane. A helical transmembrane segment spans residues 236–256 (IWTLLMFMSFFLVMSTFDSII). The Extracellular segment spans residues 257–268 (SYSRTIFQGNPS). The helical transmembrane segment at 269 to 289 (LYCAQILVAHSYAVVSPMLVL) threads the bilayer. Topologically, residues 290–314 (SNENRLTNPLISMYERIVRLDFLCW) are cytoplasmic.

It belongs to the G-protein coupled receptor 1 family.

The protein resides in the cell membrane. Functionally, putative pheromone receptor implicated in the regulation of social as well as reproductive behavior. The chain is Vomeronasal type-1 receptor 98 (Vom1r98) from Rattus norvegicus (Rat).